The chain runs to 121 residues: Large ribosomal subunit protein bL12 (121 aa).

Belongs to the bacterial ribosomal protein bL12 family. In terms of assembly, homodimer. Part of the ribosomal stalk of the 50S ribosomal subunit. Forms a multimeric L10(L12)X complex, where L10 forms an elongated spine to which 2 to 4 L12 dimers bind in a sequential fashion. Binds GTP-bound translation factors.

Functionally, forms part of the ribosomal stalk which helps the ribosome interact with GTP-bound translation factors. Is thus essential for accurate translation. The chain is Large ribosomal subunit protein bL12 from Tremblaya princeps.